We begin with the raw amino-acid sequence, 640 residues long: Epithelial sodium channel subunit beta (640 aa).

The Cytoplasmic portion of the chain corresponds to 1–50; it reads MHVKKYLLKGLHRLQKGPGYTYKELLVWYCDNTNTHGPKRIICEGPKKKA. The chain crosses the membrane as a helical span at residues 51–71; sequence MWFLLTLLFAALVCWQWGIFI. At 72–532 the chain is on the extracellular side; the sequence is RTYLSWEVSV…GGQFGFWMGG (461 aa). 9 disulfides stabilise this stretch: Cys98/Cys272, Cys184/Cys189, Cys196/Cys203, Cys249/Cys256, Cys361/Cys448, Cys386/Cys444, Cys390/Cys440, Cys399/Cys426, and Cys401/Cys415. Residue Asn260 is glycosylated (N-linked (GlcNAc...) asparagine). Residues 533–553 form a helical membrane-spanning segment; the sequence is SVLCLIEFGEIIIDFVWITII. Over 554–640 the chain is Cytoplasmic; the sequence is KLVALAKSLR…IESDSEGDAI (87 aa). Residues 590 to 640 are disordered; sequence FQPDTAPRSPNTGPYPSEQALPIPGTPPPNYDSLRLQPLDVIESDSEGDAI. The short motif at 616-620 is the PY motif; recruits WW domain-containing proteins and is thereby required for ubiquitination and inhibition of the channel by NEDD4 and NEDD4L element; sequence PPPNY. A compositionally biased stretch (acidic residues) spans 631–640; it reads IESDSEGDAI. Residues Ser633 and Ser635 each carry the phosphoserine modification.

It belongs to the amiloride-sensitive sodium channel (TC 1.A.6) family. SCNN1B subfamily. In terms of assembly, component of the heterotrimeric epithelial sodium channel (ENaC) composed of an alpha/SCNN1A, a beta/SCNN1B and a gamma/SCNN1G subunit. An additional delta/SCNN1D subunit can replace the alpha/SCNN1A subunit to form an alternative channel with specific properties. Interacts with WWP1 (via WW domains). Interacts with WWP2 (via WW domains); inhibits the channel. Interacts with the full-length immature form of PCSK9 (pro-PCSK9); inhibits ENaC by promoting its proteasomal degradation. Interacts (N-glycosylated) with BPIFA1; the interaction is direct and inhibits the proteolytic processing of SCNN1A and SCNN1G and the activation of ENaC. In terms of processing, ubiquitinated. Can be ubiquitinated at multiple sites and undergo monoubiquitination and polyubiquitination. Ubiquitination by NEDD4 or NEDD4L inhibits the ENaC channel through endocytosis, intracellular retention and degradation of its individual subunits. However, some studies could not confirm the ubiquitination of this subunit of the ENaC. Phosphorylated on serine and threonine residues. Aldosterone and insulin increase the basal level of phosphorylation. Post-translationally, N-glycosylated. N-glycosylation is required for interaction with BPIFA1. In terms of tissue distribution, detected in placenta, lung and kidney. Expressed in kidney (at protein level).

The protein localises to the apical cell membrane. It is found in the cytoplasmic vesicle membrane. It carries out the reaction Na(+)(in) = Na(+)(out). With respect to regulation, originally identified and characterized by its inhibition by the diuretic drug amiloride. Functionally, this is one of the three pore-forming subunits of the heterotrimeric epithelial sodium channel (ENaC), a critical regulator of sodium balance and fluid homeostasis. ENaC operates in epithelial tissues, where it mediates the electrodiffusion of sodium ions from extracellular fluid through the apical membrane of cells, with water following osmotically. It plays a key role in maintaining sodium homeostasis through electrogenic sodium reabsorption in the kidneys. Additionally, ENaC is essential for airway surface liquid homeostasis, which is crucial for proper mucus clearance. The chain is Epithelial sodium channel subunit beta from Homo sapiens (Human).